The sequence spans 122 residues: Small ribosomal subunit protein uS13 (122 aa).

The interval 97-122 (PVRGQRTHTNARTRKGPAKAIAGKKK) is disordered.

The protein belongs to the universal ribosomal protein uS13 family. In terms of assembly, part of the 30S ribosomal subunit. Forms a loose heterodimer with protein S19. Forms two bridges to the 50S subunit in the 70S ribosome.

Located at the top of the head of the 30S subunit, it contacts several helices of the 16S rRNA. In the 70S ribosome it contacts the 23S rRNA (bridge B1a) and protein L5 of the 50S subunit (bridge B1b), connecting the 2 subunits; these bridges are implicated in subunit movement. Contacts the tRNAs in the A and P-sites. The protein is Small ribosomal subunit protein uS13 of Rhizobium rhizogenes (strain K84 / ATCC BAA-868) (Agrobacterium radiobacter).